Here is a 912-residue protein sequence, read N- to C-terminus: Protein translocase subunit SecA (912 aa).

ATP is bound by residues Gln87, 105–109 (GEGKT), and Asp508. The tract at residues 869–912 (EQMQGGNAPVPVSQVTRDEPKVGRNDPCPCGSGKKYKHCHGQLS) is disordered. Residues Cys896, Cys898, Cys907, and His908 each coordinate Zn(2+). Residues 902–912 (KKYKHCHGQLS) are compositionally biased toward basic residues.

Belongs to the SecA family. Monomer and homodimer. Part of the essential Sec protein translocation apparatus which comprises SecA, SecYEG and auxiliary proteins SecDF-YajC and YidC. Zn(2+) is required as a cofactor.

The protein localises to the cell inner membrane. It localises to the cytoplasm. The enzyme catalyses ATP + H2O + cellular proteinSide 1 = ADP + phosphate + cellular proteinSide 2.. Its function is as follows. Part of the Sec protein translocase complex. Interacts with the SecYEG preprotein conducting channel. Has a central role in coupling the hydrolysis of ATP to the transfer of proteins into and across the cell membrane, serving both as a receptor for the preprotein-SecB complex and as an ATP-driven molecular motor driving the stepwise translocation of polypeptide chains across the membrane. This Xanthomonas axonopodis pv. citri (strain 306) protein is Protein translocase subunit SecA.